An 830-amino-acid polypeptide reads, in one-letter code: V-type proton ATPase 116 kDa subunit a 3 (830 aa).

At 1–385 the chain is on the cytoplasmic side; the sequence is MGSMFRSEEV…DAYGVGRYQE (385 aa). A disordered region spans residues 139–158; the sequence is QLAAAHTDGASERTPLLQAP. The chain crosses the membrane as a helical span at residues 386 to 404; it reads VNPAPYTIITFPFLFAVMF. At 405–406 the chain is on the vacuolar side; the sequence is GD. Residues 407-423 form a helical membrane-spanning segment; it reads VGHGLLMFLFALAMVLA. Residues 424–438 are Cytoplasmic-facing; that stretch reads ENRPAVKAAQNEIWQ. The helical transmembrane segment at 439–468 threads the bilayer; that stretch reads TFFRGRYLLLLMGLFSIYTGFIYNECFSRA. Over 469–532 the chain is Vacuolar; it reads TSIFPSGWSV…AANHLSFLNS (64 aa). A helical membrane pass occupies residues 533 to 552; the sequence is FKMKMSVILGVVHMAFGVVL. Over 553–570 the chain is Cytoplasmic; it reads GVFNHVHFGQRHRLLLET. Residues 571–591 traverse the membrane as a helical segment; that stretch reads LPELTFLLGLFGYLVFLVIYK. At 592 to 635 the chain is on the vacuolar side; sequence WLCVWAARAASAPSILIHFINMFLFSHSPSNRLLYPRQEVVQAT. A helical transmembrane segment spans residues 636 to 655; it reads LVVLALAMVPILLLGTPLHL. Over 656 to 720 the chain is Cytoplasmic; that stretch reads LHRHRRRLRR…EVLMHQAIHT (65 aa). The disordered stretch occupies residues 681–701; it reads LPDASVNGWSSDEEKAGGLDD. The chain crosses the membrane as a helical span at residues 721–745; the sequence is IEFCLGCVSNTASYLRLWALSLAHA. Residues 746–766 lie on the Vacuolar side of the membrane; the sequence is QLSEVLWAMVMRIGLGLGREV. Residues 767–807 traverse the membrane as a helical segment; sequence GVAAVVLVPIFAAFAVMTVAILLVMEGLSAFLHALRLHWVE. Residues 808 to 830 are Cytoplasmic-facing; sequence FQNKFYSGTGYKLSPFTFAATDD.

It belongs to the V-ATPase 116 kDa subunit family. V-ATPase is a heteromultimeric enzyme made up of two complexes: the ATP-hydrolytic V1 complex and the proton translocation V0 complex. The V1 complex consists of three catalytic AB heterodimers that form a heterohexamer, three peripheral stalks each consisting of EG heterodimers, one central rotor including subunits D and F, and the regulatory subunits C and H. The proton translocation complex V0 consists of the proton transport subunit a, a ring of proteolipid subunits c9c'', rotary subunit d, subunits e and f, and the accessory subunits ATP6AP1/Ac45 and ATP6AP2/PRR. In terms of tissue distribution, isoform long is highly expressed in osteoclastomas. Isoform short is highly expressed in thymus.

It localises to the membrane. In terms of biological role, subunit of the V0 complex of vacuolar(H+)-ATPase (V-ATPase), a multisubunit enzyme composed of a peripheral complex (V1) that hydrolyzes ATP and a membrane integral complex (V0) that translocates protons. V-ATPase is responsible for acidifying and maintaining the pH of intracellular compartments and in some cell types, is targeted to the plasma membrane, where it is responsible for acidifying the extracellular environment. Seems to be directly involved in T-cell activation. The sequence is that of V-type proton ATPase 116 kDa subunit a 3 (TCIRG1) from Homo sapiens (Human).